A 163-amino-acid polypeptide reads, in one-letter code: ADP-ribosylation factor-like protein 2-binding protein (163 aa).

The protein belongs to the ARL2BP family. In terms of assembly, interacts with GTP bound ARL2 and ARL3; the complex ARL2-ARL2BP as well as ARL2BP alone, binds to SLC25A4/ANT1. Interaction with ARL2 may be required for targeting to cilia basal body. Interacts with STAT3; interaction is enhanced with ARL2. Found in a complex with ARL2BP, ARL2 and SLC25A6. Found in a complex with ARL2, ARL2BP and SLC25A4. Interacts with STAT2, STAT3 and STAT4. In terms of tissue distribution, widely expressed, with most abundant activity in brain, especially in hippocampus and cortex. Also expressed in lung, cerebellum, liver, kidney, retina, spleen, muscle and heart (at protein level).

The protein resides in the cytoplasm. It is found in the mitochondrion intermembrane space. It localises to the cytoskeleton. The protein localises to the microtubule organizing center. Its subcellular location is the centrosome. The protein resides in the nucleus. It is found in the cilium basal body. Functionally, together with ARL2, plays a role in the nuclear translocation, retention and transcriptional activity of STAT3. May play a role as an effector of ARL2. The polypeptide is ADP-ribosylation factor-like protein 2-binding protein (Arl2bp) (Mus musculus (Mouse)).